Here is a 492-residue protein sequence, read N- to C-terminus: Beclin 1-associated autophagy-related key regulator (492 aa).

Serine 29 carries the phosphoserine modification. A coiled-coil region spans residues 70-180; the sequence is RDRERFIDKK…KLGDLVEKKT (111 aa). Disordered stretches follow at residues 213-232 and 411-473; these read TSGR…MTSS and GVAG…AGGM. Polar residues predominate over residues 222 to 232; that stretch reads SSETDSAMTSS. Position 416 is a phosphoserine (serine 416). The segment covering 424-433 has biased composition (acidic residues); sequence VSDEETDLGT. Position 429 is a phosphothreonine (threonine 429). Over residues 447–473 the composition is skewed to low complexity; it reads PSQPVEVSQSQSTQASPPIASSSAGGM.

This sequence belongs to the ATG14 family. As to quaternary structure, forms homooligomers; homo-oligomerization is essential for the roles in membrane tethering and enhancement of SNARE-mediated fusion. Component of the PI3K (PI3KC3/PI3K-III/class III phosphatidylinositol 3-kinase) complex I (PI3KC3-C1) in which the core composed of the catalytic subunit PIK3C3, the regulatory subunit PIK3R4 and BECN1 is associated with ATG14. PI3KC3-C1 displays a V-shaped architecture with PIK3R4 serving as a bridge between PIK3C3 and the ATG14:BECN1 subcomplex. PI3KC3-C1 can associate with further regulatory subunits. Interacts with PIK3CB. Interacts (via coiled-coil domain) with BECN2 (via coiled-coil domain); this interaction is tighter than BECN2 self-association. Interacts with the STX17-SNAP29 binary t-SNARE complex. Interacts with NRBF2. Interacts with PIK3C3 and BECN1; this interaction is increased in the absence of TMEM39A. Interacts with STEEP1; the interaction is required for trafficking of STING1 from the endoplasmic reticulum. Interacts with ARMC3 (via ARM domains). In terms of processing, ubiquitinated via 'Lys-6', 'Lys-11' and 'Lys-63'-linked polyubiquitin chains on multiple lysines by MARCHF7, leading to ATG14 aggregation and loss of interaction with STX17.

It localises to the cytoplasm. It is found in the endoplasmic reticulum membrane. Its subcellular location is the preautophagosomal structure membrane. Functionally, required for both basal and inducible autophagy. Determines the localization of the autophagy-specific PI3-kinase complex. Plays a role in autophagosome formation and MAP1LC3/LC3 conjugation to phosphatidylethanolamine. Promotes BECN1 translocation from the trans-Golgi network to autophagosomes. Enhances PIK3C3 activity in a BECN1-dependent manner. Essential for the autophagy-dependent phosphorylation of BECN1. Stimulates the phosphorylation of BECN1, but suppresses the phosphorylation PIK3C3 by AMPK. Binds to STX17-SNAP29 binary t-SNARE complex on autophagosomes and primes it for VAMP8 interaction to promote autophagosome-endolysosome fusion. Modulates the hepatic lipid metabolism. This Rattus norvegicus (Rat) protein is Beclin 1-associated autophagy-related key regulator.